The primary structure comprises 462 residues: RuvB-like 2 (462 aa).

An ATP-binding site is contributed by 76-83 (GQPGTGKT).

This sequence belongs to the RuvB family. Forms homohexameric rings. Can form a dodecamer with ruvbl2 made of two stacked hexameric rings. Is a component of the RNA polymerase II holoenzyme complex. Component of the chromatin-remodeling Ino80 complex. Component of some MLL1/MLL complex.

It is found in the nucleus. It localises to the dynein axonemal particle. It carries out the reaction ATP + H2O = ADP + phosphate + H(+). Its function is as follows. Has single-stranded DNA-stimulated ATPase and ATP-dependent DNA helicase (5' to 3') activity suggesting a role in nuclear processes such as recombination and transcription. Proposed core component of the chromatin remodeling INO80 complex which exhibits DNA- and nucleosome-activated ATPase activity and catalyzes ATP-dependent nucleosome sliding. Involved in the endoplasmic reticulum (ER)-associated degradation (ERAD) pathway where it negatively regulates expression of ER stress response genes. This is RuvB-like 2 (ruvbl2) from Xenopus laevis (African clawed frog).